A 446-amino-acid polypeptide reads, in one-letter code: ATP synthase subunit b-delta (446 aa).

Positions 1 to 168 are ATP synthase subunit b; sequence MSTFIGQLVG…PKGADVEYPL (168 aa). Residues 4-24 traverse the membrane as a helical segment; it reads FIGQLVGFAAIVYLVWWYVVP. The ATP synthase subunit delta stretch occupies residues 169-446; sequence LAKMRSASRR…LVAAEAALPD (278 aa).

This sequence in the N-terminal section; belongs to the ATPase B chain family. The protein in the C-terminal section; belongs to the ATPase delta chain family. F-type ATPases have 2 components, F(1) - the catalytic core - and F(0) - the membrane proton channel. F(1) has five subunits: alpha(3), beta(3), gamma(1), delta(1), epsilon(1). F(0) has three main subunits: a(1), b(2) and c(10-14). The alpha and beta chains form an alternating ring which encloses part of the gamma chain. F(1) is attached to F(0) by a central stalk formed by the gamma and epsilon chains, while a peripheral stalk is formed by the delta and b chains.

Its subcellular location is the cell membrane. Its function is as follows. F(1)F(0) ATP synthase produces ATP from ADP in the presence of a proton or sodium gradient. F-type ATPases consist of two structural domains, F(1) containing the extramembraneous catalytic core and F(0) containing the membrane proton channel, linked together by a central stalk and a peripheral stalk. During catalysis, ATP synthesis in the catalytic domain of F(1) is coupled via a rotary mechanism of the central stalk subunits to proton translocation. Functionally, this fusion protein includes a component of the F(0) channel (subunit b) and of the F(1) subunit (subunit delta). Two copies of subunit b and one of delta together form the peripheral 'stator' stalk which links F(1) to F(0). This is ATP synthase subunit b-delta (atpFH) from Mycobacterium leprae (strain Br4923).